The following is a 565-amino-acid chain: Protein NRT1/ PTR FAMILY 5.15 (565 aa).

2 helical membrane-spanning segments follow: residues 49–67 (FAYF…GPLG) and 80–100 (WSGT…AYLG). Residue threonine 104 is modified to Phosphothreonine. 10 helical membrane-spanning segments follow: residues 110–130 (LIYI…IMGL), 142–162 (SIWV…GQGG), 189–209 (FFNW…IVVA), 217–237 (WAFG…IFLL), 331–351 (IPIW…ITFF), 368–388 (IPAA…VPLY), 409–429 (LQRI…AALV), 454–474 (IWWF…SMVG), 490–510 (IGLS…GFLI), and 534–554 (YFYW…LFIS).

This sequence belongs to the major facilitator superfamily. Proton-dependent oligopeptide transporter (POT/PTR) (TC 2.A.17) family. Expressed in shoots, roots and leaves.

It localises to the membrane. The chain is Protein NRT1/ PTR FAMILY 5.15 (NPF5.15) from Arabidopsis thaliana (Mouse-ear cress).